Reading from the N-terminus, the 1159-residue chain is WASH complex subunit 5 (1159 aa).

Position 917 is a phosphoserine (Ser917).

Belongs to the strumpellin family. As to quaternary structure, component of the WASH core complex also described as WASH regulatory complex (SHRC) composed of WASH (WASHC1, WASH2P or WASH3P), WASHC2 (WASHC2A or WASHC2C), WASHC3, WASHC4 and WASHC5. The WASH core complex associates via WASHC2 with the F-actin-capping protein dimer (formed by CAPZA1, CAPZA2 or CAPZA3 and CAPZB) in a transient or substoichiometric manner which was initially described as WASH complex. Interacts with VCP, PI4K2A. As to expression, expressed ubiquitously.

It is found in the cytoplasm. Its subcellular location is the cytosol. It localises to the endoplasmic reticulum. The protein localises to the early endosome. Acts as a component of the WASH core complex that functions as a nucleation-promoting factor (NPF) at the surface of endosomes, where it recruits and activates the Arp2/3 complex to induce actin polymerization, playing a key role in the fission of tubules that serve as transport intermediates during endosome sorting. May be involved in axonal outgrowth. Involved in cellular localization of ADRB2. Involved in cellular trafficking of BLOC-1 complex cargos such as ATP7A and VAMP7. The sequence is that of WASH complex subunit 5 from Homo sapiens (Human).